The following is a 168-amino-acid chain: Type-2 ice-structuring protein (168 aa).

Residues 1–17 form the signal peptide; sequence MLTVSLLVCAMMALTQA. Positions 18–34 are excised as a propeptide; that stretch reads DHDGVLKGTATEAGEVS. Disulfide bonds link Cys45–Cys56, Cys73–Cys163, Cys107–Cys138, Cys127–Cys149, and Cys139–Cys155. The 113-residue stretch at 52-164 folds into the C-type lectin domain; the sequence is HGQRCFYSEA…CPASHASICA (113 aa).

Its subcellular location is the secreted. In terms of biological role, has antifreeze activity to protect fish blood from freezing at subzero sea water temperatures. Binds to ice crystals and inhibits their growth. The thermal hysteresis (TH) activity, the ability to lower the blood freezing point, is approximately 0.45 degrees Celsius at 0.15 mM for this protein. The protein is Type-2 ice-structuring protein of Brachyopsis segaliensis (Sea poacher).